The following is a 225-amino-acid chain: MAGSSEEAPDYGRGVVIMDDWPGYDLNLFTYPQHYYGDLEYVLIPHGIIVDRIERLAKDIMKDIGYSDIMVLCVLKGGYKFCADLVEHLKNISRNSDRFVSMKVDFIRLKSYRNDQSMGEMQIIGGDDLSTLAGKNVLIVEDVVGTGRTMKALLSNIEKYKPNMIKVASLLVKRTSRSDGFRPDYAGFEIPNLFVVGYALDYNEYFRDLNHICVINEHGKEKYRV.

At Ala-2 the chain carries N-acetylalanine. Mg(2+)-binding residues include Glu-141 and Asp-142. GMP is bound by residues 141-149 (EDVVGTGRT), Lys-173, 194-195 (FV), and Asp-201. Asp-201 is a binding site for Mg(2+).

The protein belongs to the purine/pyrimidine phosphoribosyltransferase family. Homodimer.

Its function is as follows. Has low, barely detectable phosphoribosyltransferase activity (in vitro). Binds GMP, IMP and alpha-D-5-phosphoribosyl 1-pyrophosphate (PRPP). Is not expected to contribute to purine metabolism or GMP salvage. This Homo sapiens (Human) protein is Phosphoribosyltransferase domain-containing protein 1 (PRTFDC1).